The following is a 473-amino-acid chain: H(+)/Cl(-) exchange transporter ClcA (473 aa).

Over 1 to 32 (MKTDTSTFLAQQIVRLRRRDQIRRLMQRDKTP) the chain is Cytoplasmic. Residues 33-69 (LAILFMAAVVGTLTGLVGVAFEKAVSWVQNMRIGALV) traverse the membrane as a helical segment. At 70–76 (QVADHAF) the chain is on the periplasmic side. The chain crosses the membrane as a helical span at residues 77–100 (LLWPLAFILSALLAMVGYFLVRKF). Positions 106–110 (GSGIP) match the Selectivity filter part_1 motif. S107 is a binding site for chloride. The segment at residues 109–116 (IPEIEGAL) is an intramembrane region (helical). Over 117–123 (EELRPVR) the chain is Cytoplasmic. The next 2 membrane-spanning stretches (helical) occupy residues 124-141 (WWRV…TLGA) and 148-166 (EGPT…LDVF). The Selectivity filter part_2 motif lies at 146-150 (GREGP). At 167–176 (RMRSAEARHT) the chain is on the cytoplasmic side. 2 consecutive intramembrane regions (helical) follow at residues 177–189 (LLAT…LSAA) and 193–201 (PLAGILFII). The Cytoplasmic portion of the chain corresponds to 202 to 214 (EEMRPQFRYNLIS). Residues 215–232 (IKAVFTGVIMSSIVFRIF) traverse the membrane as a helical segment. Residues 233–252 (NGEAPIIEVGKLSDAPVNTL) lie on the Periplasmic side of the membrane. A helical membrane pass occupies residues 253 to 281 (WLYLILGIIFGCVGPVFNSLVLRTQDMFQ). Over 282–287 (RFHGGE) the chain is Cytoplasmic. The helical transmembrane segment at 288–309 (IKKWVLMGGAIGGLCGILGLIE) threads the bilayer. Over 310-329 (PEAAGGGFNLIPIAAAGNFS) the chain is Periplasmic. 2 helical membrane passes run 330 to 349 (VGLL…LCFS) and 355 to 376 (GIFA…MAAA). The Selectivity filter part_3 signature appears at 355–359 (GIFAP). 2 residues coordinate chloride: I356 and F357. The Periplasmic portion of the chain corresponds to 377-386 (VLFPQYHLEA). The segment at residues 387–401 (GTFAIAGMGALMAAS) is an intramembrane region (helical). Positions 402–404 (VRA) form an intramembrane region, note=Loop between two helices. An intramembrane region (helical) is located at residues 405–416 (PLTGIVLVLEMT). The note=Loop between two helices intramembrane region spans 417–421 (DNYQL). The helical transmembrane segment at 422–438 (ILPMIITCLGATLLAQF) threads the bilayer. Residues 439–473 (LGGKPLYSTILARTLAKQDAEQAAKNQNAPAGENT) lie on the Cytoplasmic side of the membrane. Position 445 (Y445) interacts with chloride.

It belongs to the chloride channel (TC 2.A.49) family. ClcA subfamily. In terms of assembly, homodimer.

The protein resides in the cell inner membrane. It catalyses the reaction 2 chloride(in) + H(+)(out) = 2 chloride(out) + H(+)(in). Functionally, proton-coupled chloride transporter. Functions as antiport system and exchanges two chloride ions for 1 proton. Probably acts as an electrical shunt for an outwardly-directed proton pump that is linked to amino acid decarboxylation, as part of the extreme acid resistance (XAR) response. The polypeptide is H(+)/Cl(-) exchange transporter ClcA (Salmonella agona (strain SL483)).